A 356-amino-acid chain; its full sequence is tRNA N6-adenosine threonylcarbamoyltransferase (356 aa).

A divalent metal cation contacts are provided by His122, His126, and Tyr143. Substrate-binding positions include 143–147, Asp175, Gly190, Glu194, and Asn287; that span reads YVSGG. Residue Asp315 participates in a divalent metal cation binding.

This sequence belongs to the KAE1 / TsaD family. Component of the EKC/KEOPS complex composed of at least BUD32, CGI121, GON7, KAE1 and PCC1; the whole complex dimerizes. It depends on a divalent metal cation as a cofactor.

The protein localises to the cytoplasm. It localises to the nucleus. The enzyme catalyses L-threonylcarbamoyladenylate + adenosine(37) in tRNA = N(6)-L-threonylcarbamoyladenosine(37) in tRNA + AMP + H(+). Component of the EKC/KEOPS complex that is required for the formation of a threonylcarbamoyl group on adenosine at position 37 (t(6)A37) in tRNAs that read codons beginning with adenine. The complex is probably involved in the transfer of the threonylcarbamoyl moiety of threonylcarbamoyl-AMP (TC-AMP) to the N6 group of A37. KAE1 likely plays a direct catalytic role in this reaction, but requires other protein(s) of the complex to fulfill this activity. The EKC/KEOPS complex also promotes both telomere uncapping and telomere elongation. The complex is required for efficient recruitment of transcriptional coactivators. This Chaetomium globosum (strain ATCC 6205 / CBS 148.51 / DSM 1962 / NBRC 6347 / NRRL 1970) (Soil fungus) protein is tRNA N6-adenosine threonylcarbamoyltransferase.